A 235-amino-acid polypeptide reads, in one-letter code: Large ribosomal subunit protein uL1 (235 aa).

This sequence belongs to the universal ribosomal protein uL1 family. In terms of assembly, part of the 50S ribosomal subunit.

Functionally, binds directly to 23S rRNA. The L1 stalk is quite mobile in the ribosome, and is involved in E site tRNA release. In terms of biological role, protein L1 is also a translational repressor protein, it controls the translation of the L11 operon by binding to its mRNA. The sequence is that of Large ribosomal subunit protein uL1 from Methylobacterium nodulans (strain LMG 21967 / CNCM I-2342 / ORS 2060).